The primary structure comprises 867 residues: MVAAAAADALAAGGDSSSPSDLYNKITGQQSSTTTSLSYAACDVITRHLISMLLEISNWTNDLAKYLAGSEQSSDDGHNERCLLFSSIFFAIDPSLALAQMSSVASKHALLIALGGFSIAALFVWYINKKDKDGRKKKKVGDVISNGLPKTATASDVQTENGNVKKANGHVNGDVQSSIGVSQKQQQKDEDEKTQKKDAVQNEKPSIDKKQPKSQAPTEKKEEKTVEIHTETEETDHVAAGDSGVVSEHKEHDKKTKQKNDEPVSIDKKSEEIEVPKQAGVVNEEPKKQSEETVVEEQFVKKEEPKLKSAPTPLLTMPSKKKVLENEQIPEEPTPTKMNDATSPLSLDIAAQMSPASFSWSEEMEKSFNEEEFRLNESSDIDRSPASPLRHLQQQHNKNRSSQKRKGGRVNGRDGVHQPQQQHQQQKKEEQGQIKKGQRRLTKEKSVEETPEKSQKRVVLKHHENEAGDAAHAQIIESPHHENASYEKSDSPGLDSQNSEASSQDSGRATGPLASPHEDGLTTEDDFLPMYEFEIPNSLVGLIIGVKGKTIKELSVRTNVRMLIRQHHETDKVKTHQICQVRGKRDEINHCLQMLRRRFPPARFPELNLQPVVPPVLPNSNFDMLSTQPTWLTLPEDIKCEVAVSSIISASHFFIQQPTHPSFASLRHLDMYMGSLYGEQSNLPELPIPCQNGLLCAAPVGNAWFRAVTVQYFDETDEVFVKFVDYGGYSKMARQDLRQIRTDLMSLPFQSTEVMLAHVRPVDGTTNWSDAAMQKFRAMCIGKVINCKMVGQSHDTRIPMVELYMMSKDGKDAQEVRFDQVLMNCGLARTADPSKMSRITVPAALDTESRMKRPSFSSQTSQTAVVC.

Residues 108 to 128 (HALLIALGGFSIAALFVWYIN) form a helical membrane-spanning segment. 2 disordered regions span residues 145-458 (SNGL…QKRV) and 481-523 (HENA…GLTT). Over residues 152 to 162 (ATASDVQTENG) the composition is skewed to polar residues. Basic and acidic residues-rich tracts occupy residues 186–211 (QQKDEDEKTQKKDAVQNEKPSIDKKQ), 218–239 (TEKKEEKTVEIHTETEETDHVA), 247–275 (SEHKEHDKKTKQKNDEPVSIDKKSEEIEV), and 298–307 (QFVKKEEPKL). The span at 336 to 345 (TKMNDATSPL) shows a compositional bias: polar residues. Positions 363-383 (EMEKSFNEEEFRLNESSDIDR) are enriched in basic and acidic residues. Positions 397–408 (NKNRSSQKRKGG) are enriched in basic residues. Composition is skewed to basic and acidic residues over residues 441-458 (LTKEKSVEETPEKSQKRV) and 481-490 (HENASYEKSD). Over residues 494–507 (LDSQNSEASSQDSG) the composition is skewed to polar residues. Residues 528-595 (LPMYEFEIPN…DEINHCLQML (68 aa)) enclose the KH domain. The Tudor domain occupies 689–747 (PCQNGLLCAAPVGNAWFRAVTVQYFDETDEVFVKFVDYGGYSKMARQDLRQIRTDLMSL).

The protein resides in the membrane. This chain is KH domain-containing protein akap-1, found in Caenorhabditis elegans.